A 369-amino-acid chain; its full sequence is Molybdenum import ATP-binding protein ModC (369 aa).

An ABC transporter domain is found at 3 to 246 (TRPEQASKDT…LDLPLAHGDS (244 aa)). Residue 44 to 51 (GPSGSGKT) participates in ATP binding. The Mop domain maps to 305 to 369 (DTSILNILPA…AQIKGVAILG (65 aa)).

It belongs to the ABC transporter superfamily. Molybdate importer (TC 3.A.1.8) family. In terms of assembly, the complex is composed of two ATP-binding proteins (ModC), two transmembrane proteins (ModB) and a solute-binding protein (ModA).

Its subcellular location is the cell inner membrane. It carries out the reaction molybdate(out) + ATP + H2O = molybdate(in) + ADP + phosphate + H(+). Part of the ABC transporter complex ModABC involved in molybdenum import. Responsible for energy coupling to the transport system. The protein is Molybdenum import ATP-binding protein ModC of Albidiferax ferrireducens (strain ATCC BAA-621 / DSM 15236 / T118) (Rhodoferax ferrireducens).